A 304-amino-acid polypeptide reads, in one-letter code: tRNA pseudouridine synthase A (304 aa).

The Nucleophile role is filled by aspartate 65. Tyrosine 123 serves as a coordination point for substrate. Positions 274 to 304 (HTGQEKPEARLGNGDLESREERPPHEMSPLH) are disordered. A compositionally biased stretch (basic and acidic residues) spans 289–298 (LESREERPPH).

The protein belongs to the tRNA pseudouridine synthase TruA family. As to quaternary structure, homodimer.

It carries out the reaction uridine(38/39/40) in tRNA = pseudouridine(38/39/40) in tRNA. Functionally, formation of pseudouridine at positions 38, 39 and 40 in the anticodon stem and loop of transfer RNAs. The protein is tRNA pseudouridine synthase A of Gloeobacter violaceus (strain ATCC 29082 / PCC 7421).